The following is a 154-amino-acid chain: MAASRRLMKELEEIRKCGMENFRNIQVDEANLLTWQGLIVPDNPPYNKGAFRIEINFPAEYPFKPPRITFKTKIYHPNIDEKGQVCLPVISAENWKPATKTDQVIQSLIALVNDPQPEHPLRADLAEEYSNDRKKFCKNAEEFTKKYGEKRPVD.

The region spanning 2-149 is the UBC core domain; sequence AASRRLMKEL…AEEFTKKYGE (148 aa). Cysteine 86 serves as the catalytic Glycyl thioester intermediate.

It belongs to the ubiquitin-conjugating enzyme family.

It catalyses the reaction S-ubiquitinyl-[E1 ubiquitin-activating enzyme]-L-cysteine + [E2 ubiquitin-conjugating enzyme]-L-cysteine = [E1 ubiquitin-activating enzyme]-L-cysteine + S-ubiquitinyl-[E2 ubiquitin-conjugating enzyme]-L-cysteine.. It functions in the pathway protein modification; protein ubiquitination. In terms of biological role, catalyzes the covalent attachment of ubiquitin to other proteins. In Homo sapiens (Human), this protein is Ubiquitin-conjugating enzyme E2 L5.